Here is a 313-residue protein sequence, read N- to C-terminus: Pantothenate synthetase (313 aa).

Residue 43-50 (MGALHEGH) participates in ATP binding. The active-site Proton donor is His-50. Gln-75 provides a ligand contact to (R)-pantoate. Residue Gln-75 participates in beta-alanine binding. 161–164 (GEKD) provides a ligand contact to ATP. Residue Gln-167 coordinates (R)-pantoate. ATP contacts are provided by residues Val-190 and 198-201 (LSSR).

The protein belongs to the pantothenate synthetase family. Homodimer.

The protein localises to the cytoplasm. It catalyses the reaction (R)-pantoate + beta-alanine + ATP = (R)-pantothenate + AMP + diphosphate + H(+). The protein operates within cofactor biosynthesis; (R)-pantothenate biosynthesis; (R)-pantothenate from (R)-pantoate and beta-alanine: step 1/1. Catalyzes the condensation of pantoate with beta-alanine in an ATP-dependent reaction via a pantoyl-adenylate intermediate. The polypeptide is Pantothenate synthetase (Mycobacterium sp. (strain JLS)).